The sequence spans 321 residues: MIKKIAVLTSGGDAPGMNAAIRGVVRSALAEGLEVFGIYDGYQGLYNNKIKQLNRYSVSDVINRGGTFLGSARFPEFKDPNIRAKCAEILRSHGIDALVVIGGDGSYMGAKLLTEEHSFPCVGLPGTIDNDVAGTDYTIGYQTALQTAVDAIDRLRDTSSSHQRISIVEIMGRHCSDLTISAGIAGGCEYIVASEIEFNREELIQQIERSIIRGKRHAIIAITELLTDVHSLAKEIEARVGHETRATVLGHIQRGGSPCAFDRILASRMGAYAVDLLLQGKGGYCVGIQNEQLVHHDIIDAINNMQRVFKADWLKVAKRLE.

Gly-12 contacts ATP. ADP is bound by residues 22–26 (RGVVR) and 55–60 (RYSVSD). ATP-binding positions include 73 to 74 (RF) and 103 to 106 (GDGS). Residue Asp-104 participates in Mg(2+) binding. 127–129 (TID) serves as a coordination point for substrate. Asp-129 functions as the Proton acceptor in the catalytic mechanism. Position 156 (Arg-156) interacts with ADP. Substrate contacts are provided by residues Arg-164 and 171 to 173 (MGR). Residues 187–189 (GCE), Arg-213, and 215–217 (KRH) contribute to the ADP site. Substrate is bound by residues Glu-224, Arg-245, and 251 to 254 (HIQR).

The protein belongs to the phosphofructokinase type A (PFKA) family. ATP-dependent PFK group I subfamily. Prokaryotic clade 'B1' sub-subfamily. In terms of assembly, homotetramer. The cofactor is Mg(2+).

Its subcellular location is the cytoplasm. The enzyme catalyses beta-D-fructose 6-phosphate + ATP = beta-D-fructose 1,6-bisphosphate + ADP + H(+). It functions in the pathway carbohydrate degradation; glycolysis; D-glyceraldehyde 3-phosphate and glycerone phosphate from D-glucose: step 3/4. Allosterically activated by ADP and other diphosphonucleosides, and allosterically inhibited by phosphoenolpyruvate. Its function is as follows. Catalyzes the phosphorylation of D-fructose 6-phosphate to fructose 1,6-bisphosphate by ATP, the first committing step of glycolysis. The polypeptide is ATP-dependent 6-phosphofructokinase (Haemophilus influenzae (strain PittEE)).